We begin with the raw amino-acid sequence, 549 residues long: Lysine-specific demethylase JMJ31 (549 aa).

The JmjC domain occupies 125-296 (DYRPGQIYLA…SNMPEHMDSY (172 aa)). Residues His184, Asp186, and His266 each coordinate Fe cation.

It belongs to the JARID1 histone demethylase family. Fe(2+) serves as cofactor. In terms of tissue distribution, mostly expressed in leaves and inflorescences, and, to a lower extent, in roots, siliques and stems.

The protein localises to the nucleus. Its function is as follows. May function as histone H3 lysine demethylase and be involved in regulation of gene expression. The sequence is that of Lysine-specific demethylase JMJ31 from Arabidopsis thaliana (Mouse-ear cress).